Reading from the N-terminus, the 478-residue chain is Divinyl ether synthase CYP74D2 (478 aa).

Cys431 lines the heme pocket.

Belongs to the cytochrome P450 family. 9-divinyl ether synthase subfamily. Expressed in roots.

The catalysed reaction is (9S)-hydroperoxy-(10E,12Z)-octadecadienoate = colneleate + H2O. The enzyme catalyses (9S)-hydroperoxy-(10E,12Z,15Z)-octadecatrienoate = colnelenate + H2O. Functionally, involved in the biosynthesis of the anti-fungal and antibacterial toxins colneleate and colnelenate. Can use (9S)-hydroperoxy-(10E,12Z)-octadecadienoate (9-HPOD) and (9S)-hydroperoxy-(10E,12Z,15Z)-octadecatrienoate (9-HPOT) as substrates but has no activity with the corresponding 13-hydroperoxides (13-HPOD and 13-HPOT). In Solanum tuberosum (Potato), this protein is Divinyl ether synthase CYP74D2.